A 484-amino-acid chain; its full sequence is Hemogen (484 aa).

A compositionally biased stretch (basic and acidic residues) spans 1-25; it reads MDLGKDQSHLKHHQTPDPHQEENHS. Disordered regions lie at residues 1–32 and 44–91; these read MDLG…IGTW and KAEV…PQPQ. The tract at residues 7–87 is necessary for nuclear localization; that stretch reads QSHLKHHQTP…RQQNTELKVE (81 aa). Residues 61–79 are compositionally biased toward basic residues; the sequence is KKRKQQRTGKGNRRGRKRQ. Phosphoserine is present on residues S123, S159, S181, S188, and S201. T246 carries the phosphothreonine modification. Disordered regions lie at residues 265–290, 306–369, and 386–471; these read DVPK…TDQG, EPKD…YSPE, and QETS…ILNE. Residues 306-320 are compositionally biased toward basic and acidic residues; sequence EPKDLSTKTHQESAE. Residues S349 and S353 each carry the phosphoserine modification. At T360 the chain carries Phosphothreonine. A phosphoserine mark is found at S363 and S367. 3 stretches are compositionally biased toward basic and acidic residues: residues 413–428, 438–447, and 454–463; these read YKNK…EPHQ, PKAHQEDAKD, and EMKEKPKEEP.

In terms of tissue distribution, expressed in hematopoietic precursor cells, thyroid and spermatids (at protein level). Expressed in bone marrow, testis, thymus. Expressed in prostate cancer and ovarian cancer. Also expressed in thymus and thyroid tumors, non-Hodgkin lymphoma, various leukemia cell lines, peripheral blood mononuclear cells (PBMCs) and bone marrow mononuclear cells (BMMCs) of patients with leukemia.

The protein localises to the nucleus. Its function is as follows. Regulates the proliferation and differentiation of hematopoietic cells. Overexpression block the TPA-induced megakaryocytic differentiation in the K562 cell model. May also prevent cell apoptosis through the activation of the nuclear factor-kappa B (NF-kB). This chain is Hemogen (HEMGN), found in Homo sapiens (Human).